A 56-amino-acid chain; its full sequence is Small ribosomal subunit protein eS31 (56 aa).

The Zn(2+) site is built by Cys-28, Cys-31, Cys-46, and Cys-49. A C4-type zinc finger spans residues 28-49 (CPRCGPGVFMANHKDRWSCGRC).

Belongs to the eukaryotic ribosomal protein eS31 family. As to quaternary structure, part of the 30S ribosomal subunit. The cofactor is Zn(2+).

In Thermococcus gammatolerans (strain DSM 15229 / JCM 11827 / EJ3), this protein is Small ribosomal subunit protein eS31.